Here is a 95-residue protein sequence, read N- to C-terminus: DNA-directed RNA polymerase subunit Rpo11 (95 aa).

This sequence belongs to the archaeal Rpo11/eukaryotic RPB11/RPC19 RNA polymerase subunit family. In terms of assembly, part of the RNA polymerase complex.

It localises to the cytoplasm. The enzyme catalyses RNA(n) + a ribonucleoside 5'-triphosphate = RNA(n+1) + diphosphate. Its function is as follows. DNA-dependent RNA polymerase (RNAP) catalyzes the transcription of DNA into RNA using the four ribonucleoside triphosphates as substrates. This is DNA-directed RNA polymerase subunit Rpo11 from Thermococcus sibiricus (strain DSM 12597 / MM 739).